We begin with the raw amino-acid sequence, 145 residues long: Pleckstrin homology domain-containing protein 1 (145 aa).

The region spanning 26–127 (NPERSGWLTK…WINSIGRSIV (102 aa)) is the PH domain. The tract at residues 29 to 53 (RSGWLTKQGDYIKTWRRRWFVLKRG) is binds specifically PtdIns3P.

As to quaternary structure, binds PtdIns3P. Ubiquitously expressed.

The protein localises to the cytoplasm. Its function is as follows. Binds specifically to phosphatidylinositol 3-phosphate (PtdIns3P), but not to other phosphoinositides. The sequence is that of Pleckstrin homology domain-containing protein 1 (PH1) from Arabidopsis thaliana (Mouse-ear cress).